We begin with the raw amino-acid sequence, 504 residues long: Maturase K (504 aa).

It belongs to the intron maturase 2 family. MatK subfamily.

It localises to the plastid. The protein resides in the chloroplast. In terms of biological role, usually encoded in the trnK tRNA gene intron. Probably assists in splicing its own and other chloroplast group II introns. The sequence is that of Maturase K from Nepenthes distillatoria (Pitcher plant).